Consider the following 130-residue polypeptide: Protein CPn_0713/CP_0033/CPj0713/CpB0740 (130 aa).

This sequence belongs to the chlamydial CPn_0713/CT_663/TC_0034 family.

The chain is Protein CPn_0713/CP_0033/CPj0713/CpB0740 from Chlamydia pneumoniae (Chlamydophila pneumoniae).